A 208-amino-acid polypeptide reads, in one-letter code: AN1-type zinc finger protein 6 (208 aa).

An A20-type zinc finger spans residues Ser8–Asn42. Zn(2+) is bound by residues Cys14, Cys18, Cys30, and Cys33. Residues Gln41 to Asp68 show a composition bias toward polar residues. A disordered region spans residues Gln41–Glu140. A Phosphoserine modification is found at Ser49. A compositionally biased stretch (low complexity) spans Gln75–Ser94. Polar residues-rich tracts occupy residues Leu95 to Val110 and Leu120 to Glu133. The AN1-type zinc-finger motif lies at Lys143–Ala189. Residues Cys149, Cys152, Cys163, Cys165, Cys170, His173, His179, and Cys181 each coordinate Zn(2+). Lys204 bears the N6-acetyllysine mark.

In terms of assembly, interacts with PKN1. Interacts with TRAF2. Interacts with mono- and polyubiquitin. Interacts with PEX6. Interacts with PEX5 (Cys-linked ubiquitinated).

It localises to the cytoplasm. Its function is as follows. Involved in regulation of TNF-alpha induced NF-kappa-B activation and apoptosis. Involved in modulation of 'Lys-48'-linked polyubiquitination status of TRAF2 and decreases association of TRAF2 with RIPK1. Required for PTS1 target sequence-dependent protein import into peroxisomes and PEX5 stability; may cooperate with PEX6. In vitro involved in PEX5 export from the cytosol to peroxisomes. This Pongo abelii (Sumatran orangutan) protein is AN1-type zinc finger protein 6 (ZFAND6).